The chain runs to 199 residues: Transgelin-3 (199 aa).

The 113-residue stretch at 24-136 folds into the Calponin-homology (CH) domain; it reads ADLENKLVDW…RTLMALGSVA (113 aa). Residue Ser-163 is modified to Phosphoserine. A Calponin-like repeat occupies 174–199; it reads IGLQMGSNKGASQAGMTGYGMPRQIM. The span at 178–188 shows a compositional bias: polar residues; that stretch reads MGSNKGASQAG. The tract at residues 178–199 is disordered; sequence MGSNKGASQAGMTGYGMPRQIM.

It belongs to the calponin family.

This chain is Transgelin-3 (Tagln3), found in Mus musculus (Mouse).